A 231-amino-acid chain; its full sequence is MRVKFHTTGETIMTQDELKKAVGWAALQYVQPGTIVGVGTGSTAAHFIDALGTMKGQIEGAVSSSDASTEKLKSLGIHVFDLNEVDSLGIYVDGADEINGHMQMIKGGGAALTREKIIASVAEKFICIADASKQVDILGKFPLPVEVIPMARSAVARQLVKLGGRPEYRQGVVTDNGNVILDVHGMEILDPIAMENAINAIPGVVTVGLFANRGADVALIGTPDGVKTIVK.

Residues 40–43, 93–96, and 106–109 contribute to the substrate site; these read TGST, DGAD, and KGGG. Residue glutamate 115 is the Proton acceptor of the active site. Lysine 133 contributes to the substrate binding site.

It belongs to the ribose 5-phosphate isomerase family. As to quaternary structure, homodimer.

It carries out the reaction aldehydo-D-ribose 5-phosphate = D-ribulose 5-phosphate. Its pathway is carbohydrate degradation; pentose phosphate pathway; D-ribose 5-phosphate from D-ribulose 5-phosphate (non-oxidative stage): step 1/1. Functionally, catalyzes the reversible conversion of ribose-5-phosphate to ribulose 5-phosphate. In Escherichia coli O1:K1 / APEC, this protein is Ribose-5-phosphate isomerase A.